The sequence spans 351 residues: MSRLLHAEEWAEVKELGDHHRHPQPHHVPPLTPQPPATLQARDLPVYPAELSLLDSTDPRAWLTPTLQGLCTARAAQYLLHSPELGASEAAAPRDEADSQGELVRRSGCGGLSKSPGPVKVREQLCKLKGGVVVDELGCSRQRAPSSKQVNGVQKQRRLAANARERRRMHGLNHAFDQLRNVIPSFNNDKKLSKYETLQMAQIYINALSELLQTPNVGEQPPPPTASCKNDHHHLRTASSYEGGAGASAVAGAQPAPGGGPRPTPPGPCRTRFSGPASSGGYSVQLDALHFPAFEDRALTAMMAQKDLSPSLPGGILQPVQEDNSKTSPRSHRSDGEFSPHSHYSDSDEAS.

Disordered stretches follow at residues Leu16–Leu39 and Glu89–Pro116. Pro residues predominate over residues His26–Pro36. In terms of domain architecture, bHLH spans Gln156–Leu208. 2 disordered regions span residues Gly244–Ser278 and Leu308–Ser351. Residues Ala247–Ala256 are compositionally biased toward low complexity. A compositionally biased stretch (pro residues) spans Gly258–Pro268. Positions His332–Ser351 are enriched in basic and acidic residues.

Efficient DNA binding requires dimerization with another bHLH protein. As to expression, developing nervous system, and in adult epithelial cells of the gastrointestinal tract.

It is found in the nucleus. Its function is as follows. Transcriptional regulator. Activates E box-dependent transcription in collaboration with TCF3/E47, but the activity is completely antagonized by the negative regulator of neurogenesis HES1. Plays a role in the differentiation of subsets of neural cells by activating E box-dependent transcription. The sequence is that of Transcription factor Atoh1 from Mus musculus (Mouse).